Consider the following 119-residue polypeptide: Holo-[acyl-carrier-protein] synthase (119 aa).

The Mg(2+) site is built by aspartate 8 and glutamate 58.

This sequence belongs to the P-Pant transferase superfamily. AcpS family. Mg(2+) serves as cofactor.

It localises to the cytoplasm. The catalysed reaction is apo-[ACP] + CoA = holo-[ACP] + adenosine 3',5'-bisphosphate + H(+). In terms of biological role, transfers the 4'-phosphopantetheine moiety from coenzyme A to a Ser of acyl-carrier-protein. In Bacillus mycoides (strain KBAB4) (Bacillus weihenstephanensis), this protein is Holo-[acyl-carrier-protein] synthase.